A 311-amino-acid polypeptide reads, in one-letter code: 3-dehydro-scyllo-inosose hydrolase (311 aa).

Zn(2+) contacts are provided by glutamate 35, histidine 37, aspartate 46, histidine 117, and glutamate 173.

Belongs to the creatininase superfamily. Homotrimer. Zn(2+) is required as a cofactor.

The catalysed reaction is 3-dehydro-scyllo-inosose + H2O = 5-dehydro-L-gluconate + H(+). Its pathway is polyol metabolism; myo-inositol metabolism. Its function is as follows. Catalyzes the ring-opening hydrolysis of 3-dehydro-scyllo-inosose (diketo-inositol) to 5-dehydro-L-gluconate, and thus probably functions in a myo-inositol degradation pathway together with IolG, IolM and IolO. This Thermotoga maritima (strain ATCC 43589 / DSM 3109 / JCM 10099 / NBRC 100826 / MSB8) protein is 3-dehydro-scyllo-inosose hydrolase.